We begin with the raw amino-acid sequence, 101 residues long: Small ribosomal subunit protein uS14 (101 aa).

Belongs to the universal ribosomal protein uS14 family. Part of the 30S ribosomal subunit. Contacts proteins S3 and S10.

Functionally, binds 16S rRNA, required for the assembly of 30S particles and may also be responsible for determining the conformation of the 16S rRNA at the A site. The protein is Small ribosomal subunit protein uS14 of Shewanella halifaxensis (strain HAW-EB4).